The chain runs to 116 residues: U16-barytoxin-Tl1a (116 aa).

An N-terminal signal peptide occupies residues 1–20 (MKTIIVFLSLLVLATKFGDA). A propeptide spanning residues 21 to 74 (KEGVNQEQKKEVTQNEFRVEYLNEMAAMSLLQQLEAIESALFEKEAGRNSRQKR) is cleaved from the precursor. Intrachain disulfides connect Cys75/Cys90, Cys82/Cys95, and Cys89/Cys110.

Belongs to the neurotoxin 14 (magi-1) family. 06 (ICK-Trit) subfamily. In terms of tissue distribution, expressed by the venom gland.

It localises to the secreted. Functionally, ion channel inhibitor. This chain is U16-barytoxin-Tl1a, found in Trittame loki (Brush-footed trapdoor spider).